A 478-amino-acid polypeptide reads, in one-letter code: RNA-binding protein 42 (478 aa).

Low complexity predominate over residues 1–20; sequence MASAMAGAGPAPGLPVAGGP. The interval 1 to 33 is disordered; the sequence is MASAMAGAGPAPGLPVAGGPVVPGPGVGIPGKS. A2 carries the N-acetylalanine modification. S133 carries the phosphoserine modification. Asymmetric dimethylarginine occurs at positions 151, 156, 166, and 179. Disordered stretches follow at residues 171-207 and 317-354; these read LSSAAGGPRPMALRPPHQALVGPPLPGPPGPPMMLPP and SLRPRPRPPRPEPPPGLMALEVPEPLGEDKKKGKPEKL. The segment covering 193 to 205 has biased composition (pro residues); the sequence is PPLPGPPGPPMML. A necessary for interaction with HNRNPK region spans residues 234–478; that stretch reads ELGLGLGLGL…QKEKKKLGLR (245 aa). A compositionally biased stretch (basic and acidic residues) spans 343–354; the sequence is GEDKKKGKPEKL. Positions 379–457 constitute an RRM domain; the sequence is FRIFCGDLGN…RPIKLRKSMW (79 aa).

This sequence belongs to the RRM RBM42 family. As to quaternary structure, interacts with HNRNPK. In terms of tissue distribution, expressed in cell lines (at protein level). Expressed in heart, brain, spleen, lung, liver, skeletal muscle, kidney and testis.

The protein localises to the nucleus. It is found in the cytoplasm. Functionally, binds (via the RRM domain) to the 3'-untranslated region (UTR) of CDKN1A mRNA. The polypeptide is RNA-binding protein 42 (Rbm42) (Mus musculus (Mouse)).